We begin with the raw amino-acid sequence, 194 residues long: Large ribosomal subunit protein eL15 (194 aa).

Residues 164–194 (AGRKARGLRRKGRGAEKVRPSLRANFRKKRR) are disordered. Over residues 166 to 175 (RKARGLRRKG) the composition is skewed to basic residues.

The protein belongs to the eukaryotic ribosomal protein eL15 family.

The protein is Large ribosomal subunit protein eL15 (rpl15e) of Archaeoglobus fulgidus (strain ATCC 49558 / DSM 4304 / JCM 9628 / NBRC 100126 / VC-16).